Here is a 28-residue protein sequence, read N- to C-terminus: Potassium channel toxin alpha-KTx 9.10 (28 aa).

Disulfide bonds link Cys-3–Cys-19, Cys-6–Cys-24, and Cys-10–Cys-26.

The protein belongs to the short scorpion toxin superfamily. Potassium channel inhibitor family. Alpha-KTx 09 subfamily. Expressed by the venom gland.

The protein resides in the secreted. Blocks Shaker potassium channels. This is Potassium channel toxin alpha-KTx 9.10 from Mesobuthus eupeus (Lesser Asian scorpion).